The primary structure comprises 162 residues: MEAIKDFFGSLMLREMLKGMALTGRYMFSRKITVQFPEEKTPQSPRFRGLHALRRYPNGEERCIACKLCEAVCPAMAITIESEQRDDGSRRTTRYDIDLTKCIFCGFCEESCPVDSIVETHIFEYHGEKRGDLYYTKEMLLAVGDRYETEIAAARTADAAYR.

4Fe-4S ferredoxin-type domains lie at 53–83 (LRRY…IESE) and 93–122 (TRYD…ETHI). [4Fe-4S] cluster is bound by residues C63, C66, C69, C73, C102, C105, C108, and C112.

The protein belongs to the complex I 23 kDa subunit family. NDH-1 is composed of 14 different subunits. Subunits NuoA, H, J, K, L, M, N constitute the membrane sector of the complex. It depends on [4Fe-4S] cluster as a cofactor.

It localises to the cell inner membrane. The catalysed reaction is a quinone + NADH + 5 H(+)(in) = a quinol + NAD(+) + 4 H(+)(out). Functionally, NDH-1 shuttles electrons from NADH, via FMN and iron-sulfur (Fe-S) centers, to quinones in the respiratory chain. The immediate electron acceptor for the enzyme in this species is believed to be ubiquinone. Couples the redox reaction to proton translocation (for every two electrons transferred, four hydrogen ions are translocated across the cytoplasmic membrane), and thus conserves the redox energy in a proton gradient. The polypeptide is NADH-quinone oxidoreductase subunit I (Herminiimonas arsenicoxydans).